The chain runs to 502 residues: Mannitol 2-dehydrogenase (502 aa).

37 to 48 lines the NAD(+) pocket; it reads IVHVGVGGFHRA.

Belongs to the mannitol dehydrogenase family. As to quaternary structure, monomer.

It carries out the reaction D-mannitol + NAD(+) = D-fructose + NADH + H(+). Functionally, catalyzes the NAD(H)-dependent interconversion of D-fructose and D-mannitol in the mannitol metabolic pathway. This Aspergillus oryzae (strain ATCC 42149 / RIB 40) (Yellow koji mold) protein is Mannitol 2-dehydrogenase.